The sequence spans 315 residues: Ribosomal RNA small subunit methyltransferase H (315 aa).

S-adenosyl-L-methionine is bound by residues 33–35 (AGH), Asp53, Phe80, Asp101, and Gln108.

The protein belongs to the methyltransferase superfamily. RsmH family.

It is found in the cytoplasm. It catalyses the reaction cytidine(1402) in 16S rRNA + S-adenosyl-L-methionine = N(4)-methylcytidine(1402) in 16S rRNA + S-adenosyl-L-homocysteine + H(+). Specifically methylates the N4 position of cytidine in position 1402 (C1402) of 16S rRNA. The protein is Ribosomal RNA small subunit methyltransferase H of Natranaerobius thermophilus (strain ATCC BAA-1301 / DSM 18059 / JW/NM-WN-LF).